The following is a 95-amino-acid chain: MEQAPEDQGPQREPYNEWALELLEDLKNEALRHFPRPWLHGLGQYFYNTYGDTWEGVEAIIRTLQQLLFIHYRIGCQHSRIGITPQRRRNGASRS.

Residues 1 to 42 (MEQAPEDQGPQREPYNEWALELLEDLKNEALRHFPRPWLHGL) are homooligomerization. Residues serine 79, serine 93, and serine 95 each carry the phosphoserine; by host modification.

It belongs to the HIV-1 VPR protein family. Homooligomer, may form homodimer. Interacts with p6-gag region of the Pr55 Gag precursor protein through a (Leu-X-X)4 motif near the C-terminus of the P6gag protein. Interacts with host UNG. May interact with host RAD23A/HHR23A. Interacts with host VPRBP/DCAF1, leading to hijack the CUL4A-RBX1-DDB1-DCAF1/VPRBP complex, mediating ubiquitination of host proteins such as TERT and ZGPAT and arrest of the cell cycle in G2 phase. In terms of processing, phosphorylated on several residues by host. These phosphorylations regulate VPR activity for the nuclear import of the HIV-1 pre-integration complex.

It is found in the virion. The protein localises to the host nucleus. The protein resides in the host extracellular space. In terms of biological role, during virus replication, may deplete host UNG protein, and incude G2-M cell cycle arrest. Acts by targeting specific host proteins for degradation by the 26S proteasome, through association with the cellular CUL4A-DDB1 E3 ligase complex by direct interaction with host VPRPB/DCAF-1. Cell cycle arrest reportedly occurs within hours of infection and is not blocked by antiviral agents, suggesting that it is initiated by the VPR carried into the virion. Additionally, VPR induces apoptosis in a cell cycle dependent manner suggesting that these two effects are mechanistically linked. Detected in the serum and cerebrospinal fluid of AIDS patient, VPR may also induce cell death to bystander cells. Its function is as follows. During virus entry, plays a role in the transport of the viral pre-integration (PIC) complex to the host nucleus. This function is crucial for viral infection of non-dividing macrophages. May act directly at the nuclear pore complex, by binding nucleoporins phenylalanine-glycine (FG)-repeat regions. This Pan troglodytes (Chimpanzee) protein is Protein Vpr.